A 165-amino-acid polypeptide reads, in one-letter code: Myosin regulatory light chain 2A, cardiac muscle isoform (165 aa).

Residue Ala2 is modified to N,N,N-trimethylalanine. EF-hand domains lie at Ala24 to Leu59, Asp94 to Arg128, and Phe129 to Lys164. Positions 37, 39, 41, and 48 each coordinate Ca(2+).

In terms of assembly, myosin is a hexamer of 2 heavy chains and 4 light chains. In terms of processing, the N-terminus is blocked. N,N,N-trimethylalanine, found in other myosin light chains would not have been detected in the N-terminal tryptic peptide in PubMed:7319048 because it would remain trimethylated and ninhydrin negative after hydrolysis.

In Gallus gallus (Chicken), this protein is Myosin regulatory light chain 2A, cardiac muscle isoform.